The chain runs to 446 residues: Phosphoglucosamine mutase (446 aa).

The Phosphoserine intermediate role is filled by Ser-102. Mg(2+) is bound by residues Ser-102, Asp-241, Asp-243, and Asp-245. Ser-102 carries the phosphoserine modification.

This sequence belongs to the phosphohexose mutase family. The cofactor is Mg(2+). In terms of processing, activated by phosphorylation.

It carries out the reaction alpha-D-glucosamine 1-phosphate = D-glucosamine 6-phosphate. Its function is as follows. Catalyzes the conversion of glucosamine-6-phosphate to glucosamine-1-phosphate. The chain is Phosphoglucosamine mutase from Yersinia enterocolitica serotype O:8 / biotype 1B (strain NCTC 13174 / 8081).